Reading from the N-terminus, the 396-residue chain is S-adenosylmethionine synthase 1 (396 aa).

Glutamate 13 is a binding site for Mg(2+). Histidine 19 lines the ATP pocket. Glutamate 47 lines the K(+) pocket. The L-methionine site is built by glutamate 60 and glutamine 103. Residues 171–173 (DGK), 239–242 (SGRF), aspartate 250, 256–257 (RK), alanine 273, lysine 277, and lysine 281 contribute to the ATP site. Residue aspartate 250 coordinates L-methionine. Residue lysine 281 participates in L-methionine binding.

The protein belongs to the AdoMet synthase family. Homotetramer. Mn(2+) serves as cofactor. It depends on Mg(2+) as a cofactor. Co(2+) is required as a cofactor. Requires K(+) as cofactor.

The protein resides in the cytoplasm. The catalysed reaction is L-methionine + ATP + H2O = S-adenosyl-L-methionine + phosphate + diphosphate. It participates in amino-acid biosynthesis; S-adenosyl-L-methionine biosynthesis; S-adenosyl-L-methionine from L-methionine: step 1/1. In terms of biological role, catalyzes the formation of S-adenosylmethionine from methionine and ATP. The reaction comprises two steps that are both catalyzed by the same enzyme: formation of S-adenosylmethionine (AdoMet) and triphosphate, and subsequent hydrolysis of the triphosphate. May be involved in the synthesis of betain in response to abiotic stress such as high salinity. This is S-adenosylmethionine synthase 1 (SAMS1) from Beta vulgaris (Sugar beet).